The following is a 275-amino-acid chain: Elongation factor Ts (275 aa).

An Isoglutamyl lysine isopeptide (Lys-Gln) (interchain with Q-Cter in protein Pup) cross-link involves residue Lys-36. The tract at residues 76–79 (TDFV) is involved in Mg(2+) ion dislocation from EF-Tu.

This sequence belongs to the EF-Ts family.

The protein localises to the cytoplasm. Its function is as follows. Associates with the EF-Tu.GDP complex and induces the exchange of GDP to GTP. It remains bound to the aminoacyl-tRNA.EF-Tu.GTP complex up to the GTP hydrolysis stage on the ribosome. The chain is Elongation factor Ts from Mycolicibacterium smegmatis (strain ATCC 700084 / mc(2)155) (Mycobacterium smegmatis).